The primary structure comprises 87 residues: uncharacterized protein (87 aa).

A 2Fe-2S ferredoxin-type domain is found at 4–87 (SIIEITNIKK…KPKGNITIKI (84 aa)). Residues Cys-38, Cys-43, Cys-46, and Cys-75 each contribute to the [2Fe-2S] cluster site.

[2Fe-2S] cluster serves as cofactor.

This is an uncharacterized protein from Buchnera aphidicola subsp. Acyrthosiphon pisum (strain APS) (Acyrthosiphon pisum symbiotic bacterium).